Reading from the N-terminus, the 279-residue chain is S-methyl-5'-thioadenosine phosphorylase (279 aa).

Phosphate-binding positions include Ser28, 70–71 (RH), and 103–104 (SA). Met202 is a substrate binding site. Thr203 is a binding site for phosphate. Residue 226 to 228 (DYD) coordinates substrate.

Belongs to the PNP/MTAP phosphorylase family. MTAP subfamily. In terms of assembly, homohexamer. Dimer of a homotrimer.

It catalyses the reaction S-methyl-5'-thioadenosine + phosphate = 5-(methylsulfanyl)-alpha-D-ribose 1-phosphate + adenine. Its pathway is amino-acid biosynthesis; L-methionine biosynthesis via salvage pathway; S-methyl-5-thio-alpha-D-ribose 1-phosphate from S-methyl-5'-thioadenosine (phosphorylase route): step 1/1. Catalyzes the reversible phosphorylation of S-methyl-5'-thioadenosine (MTA) to adenine and 5-methylthioribose-1-phosphate. Involved in the breakdown of MTA, a major by-product of polyamine biosynthesis. Responsible for the first step in the methionine salvage pathway after MTA has been generated from S-adenosylmethionine. Has broad substrate specificity with 6-aminopurine nucleosides as preferred substrates. The chain is S-methyl-5'-thioadenosine phosphorylase from Pyrobaculum aerophilum (strain ATCC 51768 / DSM 7523 / JCM 9630 / CIP 104966 / NBRC 100827 / IM2).